Reading from the N-terminus, the 314-residue chain is GDSL-like esterase Rv1075c (314 aa).

Positions 1–21 are cleaved as a signal peptide; that stretch reads MPRRSTIALATAGALASTGTA. Residue Ser-80 is the Nucleophile of the active site. Asp-244 functions as the Proton donor in the catalytic mechanism. His-247 functions as the Proton acceptor in the catalytic mechanism. The segment at 276–314 is disordered; it reads IHETPSRPGTATLEPGHTRHSMMSRLRRPRPARAVPTGG. Residues 293-306 are compositionally biased toward basic residues; sequence TRHSMMSRLRRPRP.

It belongs to the 'GDSL' lipolytic enzyme family.

It carries out the reaction an acetyl ester + H2O = an aliphatic alcohol + acetate + H(+). It catalyses the reaction a butanoate ester + H2O = an aliphatic alcohol + butanoate + H(+). The catalysed reaction is triacetin + H2O = diacetylglycerol + acetate + H(+). The enzyme catalyses 1,2,3-tributanoylglycerol + H2O = dibutanoylglycerol + butanoate + H(+). Esterase activity is significantly inhibited by the serine modifier phenylmethylsulfonyl fluoride (PMSF). Completely inhibited by diethyl pyrocarbonate. Functionally, esterase that preferentially hydrolyzes short-chain fatty acids, particularly pNP-acetate (C2) and pNP-butyrate (C4). Also has weak activity with pNP-hexanoate (C6) and pNP-octanoate (C8). It can also hydrolyze short-chain tryglycerides such as triacetin and tributyrin. Important for intracellular survival. The sequence is that of GDSL-like esterase Rv1075c from Mycobacterium tuberculosis (strain ATCC 25618 / H37Rv).